Here is a 252-residue protein sequence, read N- to C-terminus: Osmotin-like protein (252 aa).

An N-terminal signal peptide occupies residues 1 to 24; sequence MASSSAKILLPLSLLFTLLSLSQS.

The protein localises to the secreted. It is found in the cell wall. This Solanum lycopersicum (Tomato) protein is Osmotin-like protein.